The sequence spans 2035 residues: Ral GTPase-activating protein subunit alpha-1 (2035 aa).

Positions 343-384 (LVSREESKNDTVDKADKTAEPEQSHSNTSTLTEREPSSSSLC) are disordered. Residues 345 to 365 (SREESKNDTVDKADKTAEPEQ) show a composition bias toward basic and acidic residues. The span at 366–384 (SHSNTSTLTEREPSSSSLC) shows a compositional bias: polar residues. A phosphoserine mark is found at serine 710 and serine 720. The segment at 714–754 (SFSRGWSRDQPGQAPMRQRSATTTGSPGTEKARSIVRQKTV) is disordered. Residue threonine 753 is modified to Phosphothreonine. The residue at position 772 (serine 772) is a Phosphoserine. Residue threonine 777 is modified to Phosphothreonine. At serine 796 the chain carries Phosphoserine. Residues 807–817 (ERAKVNKEDTS) are compositionally biased toward basic and acidic residues. Disordered regions lie at residues 807–834 (ERAK…SANV) and 848–911 (SGNA…SHSD). 2 stretches are compositionally biased toward polar residues: residues 824–833 (NSETGGSSAN) and 849–862 (GNAS…SSPG). Phosphoserine occurs at positions 859, 860, and 863. The span at 894 to 911 (SPASAGSSDLMSSDSHSD) shows a compositional bias: low complexity. Phosphoserine occurs at positions 985, 989, 993, and 999. Positions 986–1008 (ESASPVHSALGSRSQTPSPSTLN) are disordered. Threonine 1001 is subject to Phosphothreonine. 2 positions are modified to phosphoserine: serine 1003 and serine 1477. A minimal domain that binds to TCF3/E12 region spans residues 1326-2034 (FTNKTVAHVA…PYHHFPADAD (709 aa)). The stretch at 1713 to 1746 (SEKQENDVINAILKQYTEEKEFVEKHFNDLNMKA) forms a coiled coil. The 209-residue stretch at 1795-2003 (LRNLDSRQCR…EERARYLQTI (209 aa)) folds into the Rap-GAP domain.

As to quaternary structure, component of the heterodimeric RalGAP1 complex with RALGAPB. Heterodimerization is required for activity. Interacts with the HLH region of TCF3/isoform E12. As to expression, highly expressed in brain, thymus and testis with lower levels in lung and spleen and barely detectable in heart or liver (at protein level).

Its subcellular location is the cytoplasm. The protein resides in the nucleus. Catalytic subunit of the heterodimeric RalGAP1 complex which acts as a GTPase activator for the Ras-like small GTPases RALA and RALB. This Rattus norvegicus (Rat) protein is Ral GTPase-activating protein subunit alpha-1 (Ralgapa1).